We begin with the raw amino-acid sequence, 416 residues long: 3-isopropylmalate dehydratase large subunit (416 aa).

Residues Cys-299, Cys-357, and Cys-360 each coordinate [4Fe-4S] cluster.

Belongs to the aconitase/IPM isomerase family. LeuC type 2 subfamily. In terms of assembly, heterodimer of LeuC and LeuD. It depends on [4Fe-4S] cluster as a cofactor.

The enzyme catalyses (2R,3S)-3-isopropylmalate = (2S)-2-isopropylmalate. It functions in the pathway amino-acid biosynthesis; L-leucine biosynthesis; L-leucine from 3-methyl-2-oxobutanoate: step 2/4. Catalyzes the isomerization between 2-isopropylmalate and 3-isopropylmalate, via the formation of 2-isopropylmaleate. This is 3-isopropylmalate dehydratase large subunit from Saccharolobus solfataricus (strain ATCC 35092 / DSM 1617 / JCM 11322 / P2) (Sulfolobus solfataricus).